We begin with the raw amino-acid sequence, 466 residues long: RuvB-like helicase 2 (466 aa).

ATP is bound at residue 74–81 (GPPSTGKT).

The protein belongs to the RuvB family. As to quaternary structure, may form heterododecamers with RVB1. Component of the SWR1 chromatin remodeling complex, the INO80 chromatin remodeling complex, and of the R2TP complex.

The protein resides in the nucleus. The catalysed reaction is ATP + H2O = ADP + phosphate + H(+). Its function is as follows. DNA helicase which participates in several chromatin remodeling complexes, including the SWR1 and the INO80 complexes. The SWR1 complex mediates the ATP-dependent exchange of histone H2A for the H2A variant HZT1 leading to transcriptional regulation of selected genes by chromatin remodeling. The INO80 complex remodels chromatin by shifting nucleosomes and is involved in DNA repair. Also involved in pre-rRNA processing. The sequence is that of RuvB-like helicase 2 (RVB2) from Yarrowia lipolytica (strain CLIB 122 / E 150) (Yeast).